The chain runs to 399 residues: MKLEVFAPRAAHGDKMGSDLEGAGSSDVPSPLSAAGDDSLGSDGDCAANSPAAGSGAGDLEGGGGERNSSGGASTQDDPEVTDGSRTQASPVGPCAGSVGGGEGARSKPYTRRPKPPYSYIALIAMAIRDSAGGRLTLAEINEYLMGKFPFFRGSYTGWRNSVRHNLSLNDCFVKVLRDPSRPWGKDNYWMLNPNSEYTFADGVFRRRRKRLSHRTTVSASGYGGGSPPGPAGTPQPAPTAGSSPIARSPARQEEGSSPASKFSSSFAIDSILSKPFRSRRDGTPALGVQLPWSAAPCPPLRAYPALLPASSGGALLPLCAYGAAEPTLLASRGAEVQPAAPLFVAPLSTAAPAKPFRGPETAGAAHLYCPLRLPTALQAAAACGPGPHLSYRVETLLA.

Residues 1–112 (MKLEVFAPRA…EGARSKPYTR (112 aa)) are disordered. Low complexity predominate over residues 32–54 (LSAAGDDSLGSDGDCAANSPAAG). Positions 55-66 (SGAGDLEGGGGE) are enriched in gly residues. Positions 114-205 (PKPPYSYIAL…SEYTFADGVF (92 aa)) form a DNA-binding region, fork-head. The tract at residues 211–263 (RLSHRTTVSASGYGGGSPPGPAGTPQPAPTAGSSPIARSPARQEEGSSPASKF) is disordered. Over residues 228 to 238 (PPGPAGTPQPA) the composition is skewed to pro residues.

It localises to the nucleus. Functionally, plays a role in hair follicle differentiation. This Rattus norvegicus (Rat) protein is Forkhead box protein Q1 (Foxq1).